Reading from the N-terminus, the 254-residue chain is Putative epimerase LsrE (254 aa).

A helical transmembrane segment spans residues 14-34; sequence VALLASYPLSVGILAGQWIAL. Positions 50, 52, and 81 each coordinate a divalent metal cation. Residue aspartate 52 is the Proton acceptor of the active site. Residues histidine 81, 166–169, 199–201, and 221–222 each bind substrate; these read GYGS, DGS, and GS. Aspartate 199 is an a divalent metal cation binding site. Aspartate 199 (proton donor) is an active-site residue.

The protein belongs to the ribulose-phosphate 3-epimerase family. Requires a divalent metal cation as cofactor.

The protein localises to the cell membrane. The protein is Putative epimerase LsrE (lsrE) of Salmonella paratyphi A (strain ATCC 9150 / SARB42).